A 160-amino-acid polypeptide reads, in one-letter code: Large ribosomal subunit protein uL18 (160 aa).

This sequence belongs to the universal ribosomal protein uL18 family. As to quaternary structure, part of the 50S ribosomal subunit. Contacts the 5S and 23S rRNAs.

In terms of biological role, this is one of the proteins that bind and probably mediate the attachment of the 5S RNA into the large ribosomal subunit, where it forms part of the central protuberance. The protein is Large ribosomal subunit protein uL18 of Thermoplasma volcanium (strain ATCC 51530 / DSM 4299 / JCM 9571 / NBRC 15438 / GSS1).